The sequence spans 364 residues: Methylenetetrahydrofolate--tRNA-(uracil-5-)-methyltransferase TrmFO (364 aa).

11 to 16 (GAGLAG) contributes to the FAD binding site. The segment covering 335–352 (SYLNQPCSSANDPTSSLL) has biased composition (polar residues). The interval 335-364 (SYLNQPCSSANDPTSSLLDRSPAQRDIPLQ) is disordered.

The protein belongs to the MnmG family. TrmFO subfamily. FAD serves as cofactor.

It localises to the cytoplasm. The enzyme catalyses uridine(54) in tRNA + (6R)-5,10-methylene-5,6,7,8-tetrahydrofolate + NADH + H(+) = 5-methyluridine(54) in tRNA + (6S)-5,6,7,8-tetrahydrofolate + NAD(+). The catalysed reaction is uridine(54) in tRNA + (6R)-5,10-methylene-5,6,7,8-tetrahydrofolate + NADPH + H(+) = 5-methyluridine(54) in tRNA + (6S)-5,6,7,8-tetrahydrofolate + NADP(+). Catalyzes the folate-dependent formation of 5-methyl-uridine at position 54 (M-5-U54) in all tRNAs. The sequence is that of Methylenetetrahydrofolate--tRNA-(uracil-5-)-methyltransferase TrmFO from Prochlorococcus marinus (strain MIT 9313).